Here is a 441-residue protein sequence, read N- to C-terminus: Chromosome partition protein MukF (441 aa).

A leucine-zipper region spans residues 208–236 (LDETSGNLRELQDTLNAAGDKLQAQLLRI).

Belongs to the MukF family. As to quaternary structure, interacts, and probably forms a ternary complex, with MukE and MukB via its C-terminal region. The complex formation is stimulated by calcium or magnesium. It is required for an interaction between MukE and MukB.

The protein resides in the cytoplasm. Its subcellular location is the nucleoid. In terms of biological role, involved in chromosome condensation, segregation and cell cycle progression. May participate in facilitating chromosome segregation by condensation DNA from both sides of a centrally located replisome during cell division. Not required for mini-F plasmid partitioning. Probably acts via its interaction with MukB and MukE. Overexpression results in anucleate cells. It has a calcium binding activity. The protein is Chromosome partition protein MukF of Pasteurella multocida (strain Pm70).